A 421-amino-acid polypeptide reads, in one-letter code: Subtilisin-like protease 2 (421 aa).

Positions 1-16 (MQLLNFGLLLLPFVAG) are cleaved as a signal peptide. The propeptide occupies 17–122 (DLAPQPEPLL…VHPDQHVYLA (106 aa)). The region spanning 36–122 (QYIVTLKEGL…VHPDQHVYLA (87 aa)) is the Inhibitor I9 domain. Residues 131 to 421 (RWGLGYMSSK…ERKFTLPKYF (291 aa)) form the Peptidase S8 domain. Active-site charge relay system residues include Asp169 and His201. Residues Asn248, Asn261, and Asn348 are each glycosylated (N-linked (GlcNAc...) asparagine). Ser357 (charge relay system) is an active-site residue. Asn388 is a glycosylation site (N-linked (GlcNAc...) asparagine).

This sequence belongs to the peptidase S8 family.

The protein resides in the secreted. Functionally, secreted subtilisin-like serine protease with keratinolytic activity that contributes to pathogenicity. This is Subtilisin-like protease 2 (SUB2) from Trichophyton tonsurans (Scalp ringworm fungus).